A 261-amino-acid polypeptide reads, in one-letter code: UPF0246 protein AZOSEA34360 (261 aa).

Belongs to the UPF0246 family.

The protein is UPF0246 protein AZOSEA34360 of Aromatoleum aromaticum (strain DSM 19018 / LMG 30748 / EbN1) (Azoarcus sp. (strain EbN1)).